Consider the following 231-residue polypeptide: MAKVSKRLKALRSSVEANKLYAIDEAIALVKKAATAKFDESVDVSFNLGVDPRKSDQVIRGSVVLPKGTGKTTRVAVFTQGANAEAAKEAGADIVGFEDLAAEIKAGNLNFDVVIASPDAMRIVGQLGTILGPRGLMPNPKVGTVTPNVAEAVKNAKAGQVQYRTDKAGIVHATIGRASFAEADLKENFDALLDAIVKAKPAAAKGQYLKKVAVSSTMGLGIRVDTSSVNN.

It belongs to the universal ribosomal protein uL1 family. In terms of assembly, part of the 50S ribosomal subunit.

In terms of biological role, binds directly to 23S rRNA. The L1 stalk is quite mobile in the ribosome, and is involved in E site tRNA release. Functionally, protein L1 is also a translational repressor protein, it controls the translation of the L11 operon by binding to its mRNA. This Neisseria meningitidis serogroup C (strain 053442) protein is Large ribosomal subunit protein uL1.